A 322-amino-acid chain; its full sequence is Dirigent protein 9 (322 aa).

The first 20 residues, 1–20, serve as a signal peptide directing secretion; the sequence is MAKALHITIFLFLISSNLLA.

This sequence belongs to the plant dirigent protein family. In terms of assembly, homodimer.

It localises to the secreted. The protein resides in the extracellular space. The protein localises to the apoplast. Its function is as follows. Dirigent proteins impart stereoselectivity on the phenoxy radical-coupling reaction, yielding optically active lignans from two molecules of coniferyl alcohol in the biosynthesis of lignans, flavonolignans, and alkaloids and thus plays a central role in plant secondary metabolism. The sequence is that of Dirigent protein 9 (DIR9) from Arabidopsis thaliana (Mouse-ear cress).